A 435-amino-acid polypeptide reads, in one-letter code: Adenylosuccinate synthetase (435 aa).

Residues 22-28 (GDEGKGK) and 50-52 (GHT) contribute to the GTP site. Asp-23 functions as the Proton acceptor in the catalytic mechanism. Mg(2+)-binding residues include Asp-23 and Gly-50. IMP contacts are provided by residues 23–26 (DEGK), 48–51 (NAGH), Thr-140, Arg-154, Gln-235, Thr-250, and Arg-314. The active-site Proton donor is His-51. Residue 310-316 (ATTGRKR) participates in substrate binding. Residues Arg-316, 342-344 (KLD), and 424-426 (SVG) each bind GTP.

Belongs to the adenylosuccinate synthetase family. In terms of assembly, homodimer. It depends on Mg(2+) as a cofactor.

Its subcellular location is the cytoplasm. The catalysed reaction is IMP + L-aspartate + GTP = N(6)-(1,2-dicarboxyethyl)-AMP + GDP + phosphate + 2 H(+). Its pathway is purine metabolism; AMP biosynthesis via de novo pathway; AMP from IMP: step 1/2. In terms of biological role, plays an important role in the de novo pathway of purine nucleotide biosynthesis. Catalyzes the first committed step in the biosynthesis of AMP from IMP. The polypeptide is Adenylosuccinate synthetase (Chlorobaculum parvum (strain DSM 263 / NCIMB 8327) (Chlorobium vibrioforme subsp. thiosulfatophilum)).